A 244-amino-acid chain; its full sequence is NH(3)-dependent NAD(+) synthetase (244 aa).

Residue 29–36 (GISGGIDS) participates in ATP binding. Asp-35 is a binding site for Mg(2+). Arg-113 provides a ligand contact to deamido-NAD(+). An ATP-binding site is contributed by Thr-133. Residue Glu-138 participates in Mg(2+) binding. Residues Lys-146 and Asp-153 each coordinate deamido-NAD(+). Positions 162 and 184 each coordinate ATP. 230-231 (HK) is a deamido-NAD(+) binding site.

The protein belongs to the NAD synthetase family. Homodimer.

The enzyme catalyses deamido-NAD(+) + NH4(+) + ATP = AMP + diphosphate + NAD(+) + H(+). The protein operates within cofactor biosynthesis; NAD(+) biosynthesis; NAD(+) from deamido-NAD(+) (ammonia route): step 1/1. Functionally, catalyzes the ATP-dependent amidation of deamido-NAD to form NAD. Uses ammonia as a nitrogen source. This is NH(3)-dependent NAD(+) synthetase from Mesoplasma florum (strain ATCC 33453 / NBRC 100688 / NCTC 11704 / L1) (Acholeplasma florum).